A 650-amino-acid polypeptide reads, in one-letter code: Aminopeptidase B (650 aa).

Residue 298–302 (GGMEN) participates in substrate binding. A Zn(2+)-binding site is contributed by H325. E326 functions as the Proton acceptor in the catalytic mechanism. Residues H329 and E348 each contribute to the Zn(2+) site. K446 is subject to N6-acetyllysine.

This sequence belongs to the peptidase M1 family. As to quaternary structure, monomer. It depends on Zn(2+) as a cofactor.

It is found in the secreted. The enzyme catalyses Release of N-terminal Arg and Lys from oligopeptides when P1' is not Pro. Also acts on arylamides of Arg and Lys.. Exopeptidase which selectively removes arginine and/or lysine residues from the N-terminus of several peptide substrates including Arg(0)-Leu-enkephalin, Arg(0)-Met-enkephalin and Arg(-1)-Lys(0)-somatostatin-14. Can hydrolyze leukotriene A4 (LTA-4) into leukotriene B4 (LTB-4). The protein is Aminopeptidase B (Rnpep) of Mus musculus (Mouse).